A 663-amino-acid chain; its full sequence is Polyunsaturated fatty acid lipoxygenase ALOX12 (663 aa).

A PLAT domain is found at 2-114 (GRYRIRVATG…ILSLPEGTAR (113 aa)). One can recognise a Lipoxygenase domain in the interval 115–663 (LPGDNALDMF…PSCIENSVTI (549 aa)). Ser-246 bears the Phosphoserine mark. Fe cation is bound by residues His-360, His-365, His-540, Asn-544, and Ile-663.

It belongs to the lipoxygenase family. Requires Fe cation as cofactor. Expressed in vascular smooth muscle cells.

The protein localises to the cytoplasm. Its subcellular location is the cytosol. It is found in the membrane. It carries out the reaction (5Z,8Z,11Z,14Z)-eicosatetraenoate + O2 = (12S)-hydroperoxy-(5Z,8Z,10E,14Z)-eicosatetraenoate. It catalyses the reaction (5Z,8Z,11Z,14Z)-eicosatetraenoate + O2 = (15S)-hydroperoxy-(5Z,8Z,11Z,13E)-eicosatetraenoate. The catalysed reaction is 2 leukotriene A4 + O2 + 2 H2O = 2 lipoxin A4. The enzyme catalyses 2 leukotriene A4 + O2 + 2 H2O = 2 lipoxin B4. It carries out the reaction (14S)-hydroperoxy-(4Z,7Z,10Z,12E,16Z,19Z)-docosahexaenoate = (13S,14S)-epoxy-(4Z,7Z,9E,11E,16Z,19Z)-docosahexaenoate + H2O. It catalyses the reaction N-(5Z,8Z,11Z,14Z)-eicosatetraenoyl-L-alanine + O2 = N-(15S)-hydroperoxy-(5Z,8Z,11Z,13E)-eicosatetraenoyl-alanine. The catalysed reaction is N-(5Z,8Z,11Z,14Z)-eicosatetraenoyl-L-alanine + O2 = N-(12S)-hydroperoxy-(5Z,8Z,10E,14Z)-eicosatetraenoyl-alanine. The enzyme catalyses N-(5Z,8Z,11Z,14Z)-eicosatetraenoyl-gamma-aminobutanoate + O2 = N-(15S)-hydroperoxy-(5Z,8Z,11Z,13E)-eicosatetraenoyl-gamma-aminobutanoate. It carries out the reaction N-(5Z,8Z,11Z,14Z)-eicosatetraenoyl-gamma-aminobutanoate + O2 = N-(12S)-hydroperoxy-(5Z,8Z,10E,14Z)-eicosatetraenoyl-gamma-aminobutanoate. It catalyses the reaction N-(5Z,8Z,11Z,14Z)-eicosatetraenoyl-glycine + O2 = N-(15S)-hydroperoxy-(5Z,8Z,11Z,13E)-eicosatetraenoyl-glycine. The catalysed reaction is N-(5Z,8Z,11Z,14Z)-eicosatetraenoyl-glycine + O2 = N-(12S)-hydroperoxy-(5Z,8Z,10E,14Z)-eicosatetraenoyl-glycine. The enzyme catalyses N-(5Z,8Z,11Z,14Z)-eicosatetraenoyl-taurine + O2 = N-(12S)-hydroperoxy-(5Z,8Z,10E,14Z)-eicosatetraenoyl-taurine. It carries out the reaction N-(5Z,8Z,11Z,14Z)-eicosatetraenoyl-taurine + O2 = N-(15S)-hydroperoxy-(5Z,8Z,11Z,13E)-eicosatetraenoyl-taurine. It catalyses the reaction (4Z,7Z,10Z,13Z,16Z,19Z)-docosahexaenoate + O2 = (14S)-hydroperoxy-(4Z,7Z,10Z,12E,16Z,19Z)-docosahexaenoate. The catalysed reaction is (7S)-hydroperoxy-(4Z,8E,10Z,13Z,16Z,19Z)-docosahexaenoate + O2 = (7S,14S)-dihydroperoxy-(4Z,8E,10Z,12E,16Z,19Z)-docosahexaenoate. The enzyme catalyses (7S)-hydroperoxy-(4Z,8E,10Z,13Z,16Z,19Z)-docosahexaenoate + O2 = (7S,17S)-dihydroperoxy-(4Z,8E,10Z,13Z,15E,19Z)-docosahexaenoate. It carries out the reaction (5Z,8Z,11Z,14Z,17Z)-eicosapentaenoate + O2 = (12S)-hydroperoxy-(5Z,8Z,10E,14Z,17Z)-eicosapentaenoate. It catalyses the reaction (8Z,11Z,14Z)-eicosatrienoate + O2 = (12S)-hydroperoxy-(8Z,10E,14Z)-eicosatrienoate. The catalysed reaction is (9Z,12Z)-octadecadienoate + O2 = (13S)-hydroperoxy-(9Z,11E)-octadecadienoate. The enzyme catalyses (5Z,8Z,11Z)-eicosatrienoate + O2 = (12S)-hydroperoxy-(5Z,8Z,10E)-eicosatrienoate. It carries out the reaction (14R,15S)-epoxy-(5Z,8Z,11Z)-eicosatrienoate + O2 = (12S)-hydroperoxy-(14R,15S)-epoxy-(5Z,8Z,10E)-eicosatrienoate. It catalyses the reaction (14S,15R)-epoxy-(5Z,8Z,11Z)-eicosatrienoate + O2 = (12S)-hydroperoxy-(14S,15R)-epoxy-(5Z,8Z,10E)-eicosatrienoate. Its pathway is lipid metabolism; hydroperoxy eicosatetraenoic acid biosynthesis. Activated by EGF. Arachidonic acid conversion is inhibited by (13S,14S)-epoxy-(4Z,7Z,9E,11E,16Z,19Z)-docosahexaenoate (13S,14S-epoxy-DHA). Arachidonate 12-lipoxygenase activity is decreased when PH decreases from 7.4 to 6. Functionally, catalyzes the regio and stereo-specific incorporation of molecular oxygen into free and esterified polyunsaturated fatty acids generating lipid hydroperoxides that can be further reduced to the corresponding hydroxy species. Mainly converts arachidonate ((5Z,8Z,11Z,14Z)-eicosatetraenoate) to the specific bioactive lipid (12S)-hydroperoxyeicosatetraenoate/(12S)-HPETE. Through the production of bioactive lipids like (12S)-HPETE it regulates different biological processes including platelet activation. It can also catalyze the epoxidation of double bonds of polyunsaturated fatty acids such as (14S)-hydroperoxy-docosahexaenoate/(14S)-HPDHA resulting in the formation of (13S,14S)-epoxy-DHA. Furthermore, it may participate in the sequential oxidations of DHA ((4Z,7Z,10Z,13Z,16Z,19Z)-docosahexaenoate) to generate specialized pro-resolving mediators (SPMs) like resolvin D5 ((7S,17S)-diHPDHA) and (7S,14S)-diHPDHA, that actively down-regulate the immune response and have anti-aggregation properties with platelets. An additional function involves a multistep process by which it transforms leukotriene A4/LTA4 into the bioactive lipids lipoxin A4/LXA4 and lipoxin B4/LXB4, both are vasoactive and LXA4 may regulate neutrophil function via occupancy of specific recognition sites. Can also peroxidize linoleate ((9Z,12Z)-octadecadienoate) to (13S)-hydroperoxyoctadecadienoate/ (13S-HPODE). Due to its role in regulating both the expression of the vascular endothelial growth factor (VEGF, an angiogenic factor involved in the survival and metastasis of solid tumors) and the expression of integrin beta-1 (known to affect tumor cell migration and proliferation), it can be regarded as protumorigenic. Important for cell survival, as it may play a role not only in proliferation but also in the prevention of apoptosis in vascular smooth muscle cells. The protein is Polyunsaturated fatty acid lipoxygenase ALOX12 of Homo sapiens (Human).